The chain runs to 248 residues: tRNA (guanine-N(1)-)-methyltransferase (248 aa).

Residues glycine 113 and 133–138 (IGDYVL) each bind S-adenosyl-L-methionine.

Belongs to the RNA methyltransferase TrmD family. In terms of assembly, homodimer.

The protein resides in the cytoplasm. It catalyses the reaction guanosine(37) in tRNA + S-adenosyl-L-methionine = N(1)-methylguanosine(37) in tRNA + S-adenosyl-L-homocysteine + H(+). In terms of biological role, specifically methylates guanosine-37 in various tRNAs. This is tRNA (guanine-N(1)-)-methyltransferase from Shewanella piezotolerans (strain WP3 / JCM 13877).